Reading from the N-terminus, the 159-residue chain is MPRETGRRLIAQNKRARHDYDILDTYEAGLVLRGTEVKALRAGRASLVDGFAQISDGEIWLHNVHIPEYTEGTWTNHAPRRKRKMLLHRAEIEKLVGKTQEGGLTLVPLSLYWKDGRAKIEIALARGRKSYDKRHAIAERDAAREIGRAMGRRAKGRYL.

It belongs to the SmpB family.

It is found in the cytoplasm. Its function is as follows. Required for rescue of stalled ribosomes mediated by trans-translation. Binds to transfer-messenger RNA (tmRNA), required for stable association of tmRNA with ribosomes. tmRNA and SmpB together mimic tRNA shape, replacing the anticodon stem-loop with SmpB. tmRNA is encoded by the ssrA gene; the 2 termini fold to resemble tRNA(Ala) and it encodes a 'tag peptide', a short internal open reading frame. During trans-translation Ala-aminoacylated tmRNA acts like a tRNA, entering the A-site of stalled ribosomes, displacing the stalled mRNA. The ribosome then switches to translate the ORF on the tmRNA; the nascent peptide is terminated with the 'tag peptide' encoded by the tmRNA and targeted for degradation. The ribosome is freed to recommence translation, which seems to be the essential function of trans-translation. This is SsrA-binding protein from Frankia casuarinae (strain DSM 45818 / CECT 9043 / HFP020203 / CcI3).